The chain runs to 481 residues: Serralysin B (481 aa).

Residues 1 to 15 (MQQNEKASLNTSAAA) constitute a propeptide that is removed on maturation. Residue histidine 189 coordinates Zn(2+). The active site involves glutamate 190. The Zn(2+) site is built by histidine 193 and tyrosine 230. Arginine 267, glycine 269, threonine 271, aspartate 299, glycine 301, glycine 302, aspartate 304, threonine 341, glutamate 343, glycine 348, glycine 350, aspartate 352, asparagine 357, alanine 359, asparagine 361, glycine 365, glycine 366, alanine 367, glycine 368, aspartate 370, glycine 374, glycine 377, aspartate 379, glycine 383, glycine 384, alanine 385, glycine 386, aspartate 388, aspartate 397, aspartate 404, and aspartate 414 together coordinate Ca(2+). Hemolysin-type calcium-binding repeat units lie at residues 346-363 (IGGS…DNIL), 364-381 (QGGA…ADTL), and 382-399 (TGGA…QDST).

The protein belongs to the peptidase M10B family. Ca(2+) serves as cofactor. Requires Zn(2+) as cofactor.

Its subcellular location is the secreted. It carries out the reaction Preferential cleavage of bonds with hydrophobic residues in P1'.. The protein is Serralysin B (prtB) of Dickeya chrysanthemi (Pectobacterium chrysanthemi).